We begin with the raw amino-acid sequence, 155 residues long: Ribosomal RNA large subunit methyltransferase H (155 aa).

Residues Leu-73, Gly-104, and 123–128 contribute to the S-adenosyl-L-methionine site; that span reads LSPLTL.

This sequence belongs to the RNA methyltransferase RlmH family. As to quaternary structure, homodimer.

Its subcellular location is the cytoplasm. It carries out the reaction pseudouridine(1915) in 23S rRNA + S-adenosyl-L-methionine = N(3)-methylpseudouridine(1915) in 23S rRNA + S-adenosyl-L-homocysteine + H(+). Its function is as follows. Specifically methylates the pseudouridine at position 1915 (m3Psi1915) in 23S rRNA. The polypeptide is Ribosomal RNA large subunit methyltransferase H (Pseudomonas savastanoi pv. phaseolicola (strain 1448A / Race 6) (Pseudomonas syringae pv. phaseolicola (strain 1448A / Race 6))).